The following is a 677-amino-acid chain: MAKIKKKGTSGQAKNYITRTQAVRKLQISLPDFRRLCIFKGIYPREPRNKKKASKSATQSTTFYYTKDIQYLLHEPLLRKFREQKALAKKIARSLGRGEVSDAARLEKNHAPKLTLDHVIKERYPTFIDALRDLDDALSLLFLFANLPSTSHVPPKTIALCQRVTHEFQHYLITTNSLRKSFLSIKGIYYQATIQGQDIMWLVPYRFVQRVNGDVDYRIMATFVEFYTTLLGFVNYRLYSSIGLRYPPKFDTRLDENGAELAAFTLEGRTVGDAPKAIEPAKSSSDAANQEVSAEVQKKVDNVIKKAGLDQASSEQPTETAEEVTDAIDKFETTAPEADTLPQPDMSGDQAGSLFAPFTFYISREAPKTPLEFILRAFGCKRIGWDTVLGGGAFTHNEADPRITHQIVDRPSLPESSLPSIPAAATDGGAVQKVKPGTRVPGRTYVQPQWVWDCINEGKLLRPDLYAPGATLPPHLSPWVNPKKGGYDPRASLAEQEEDGEADIDAEEESDEEMEEAGEEKPAPTAANESEDSEDESVDGGMDVAETDDDDSESEEEEEEEDEFAGIDDEDAGSESEDEEETARTQHQKELEAEAAGLPFSSSGAGDDAAAKKKSQAKKRAAKKRQEEEELERQKMMMSRKKRKLLEKMMYSNKKTAEESAKLRSKRRKIEKGAAGK.

The 110-residue stretch at 359 to 468 folds into the BRCT domain; it reads TFYISREAPK…KLLRPDLYAP (110 aa). A disordered region spans residues 472 to 677; it reads LPPHLSPWVN…RKIEKGAAGK (206 aa). Composition is skewed to acidic residues over residues 495 to 518, 529 to 538, and 545 to 581; these read EQEE…EEAG, ESEDSEDESV, and AETD…DEEE. Positions 582–592 are enriched in basic and acidic residues; the sequence is TARTQHQKELE. The stretch at 609-650 forms a coiled coil; the sequence is AAAKKKSQAKKRAAKKRQEEEELERQKMMMSRKKRKLLEKMM. Residues 612-623 are compositionally biased toward basic residues; the sequence is KKKSQAKKRAAK. The span at 624-635 shows a compositional bias: basic and acidic residues; that stretch reads KRQEEEELERQK.

The protein belongs to the pescadillo family. As to quaternary structure, component of the NOP7 complex, composed of erb1, nop7 and ytm1. The complex is held together by erb1, which interacts with nop7 via its N-terminal domain and with ytm1 via a high-affinity interaction between the seven-bladed beta-propeller domains of the 2 proteins. The NOP7 complex associates with the 66S pre-ribosome.

The protein resides in the nucleus. Its subcellular location is the nucleolus. It is found in the nucleoplasm. Component of the NOP7 complex, which is required for maturation of the 25S and 5.8S ribosomal RNAs and formation of the 60S ribosome. This Emericella nidulans (strain FGSC A4 / ATCC 38163 / CBS 112.46 / NRRL 194 / M139) (Aspergillus nidulans) protein is Pescadillo homolog (nop7).